A 640-amino-acid polypeptide reads, in one-letter code: Chaperone protein DnaK (640 aa).

T199 bears the Phosphothreonine; by autocatalysis mark. The segment covering 606-621 (QQAAGAGAQQADGTGK) has biased composition (low complexity). The disordered stretch occupies residues 606 to 640 (QQAAGAGAQQADGTGKAADDGVVDAEFEEVKEDNK). Over residues 626 to 640 (GVVDAEFEEVKEDNK) the composition is skewed to acidic residues.

This sequence belongs to the heat shock protein 70 family.

In terms of biological role, acts as a chaperone. This is Chaperone protein DnaK from Cellvibrio japonicus (strain Ueda107) (Pseudomonas fluorescens subsp. cellulosa).